The primary structure comprises 198 residues: Holliday junction branch migration complex subunit RuvA (198 aa).

Residues 1-61 form a domain I region; that stretch reads MYEYFEGIIQ…DNDQTLYGFE (61 aa). A domain II region spans residues 62–140; it reads GAADKRTFNQ…TDGQPAAAAI (79 aa). The flexible linker stretch occupies residues 141–145; it reads APVAS. The domain III stretch occupies residues 146 to 198; that stretch reads DVDSELADALAALVALGYPQRTVDGLTDTLKAFSAKTTDAYLREGLRLLSGKA.

It belongs to the RuvA family. Homotetramer. Forms an RuvA(8)-RuvB(12)-Holliday junction (HJ) complex. HJ DNA is sandwiched between 2 RuvA tetramers; dsDNA enters through RuvA and exits via RuvB. An RuvB hexamer assembles on each DNA strand where it exits the tetramer. Each RuvB hexamer is contacted by two RuvA subunits (via domain III) on 2 adjacent RuvB subunits; this complex drives branch migration. In the full resolvosome a probable DNA-RuvA(4)-RuvB(12)-RuvC(2) complex forms which resolves the HJ.

It is found in the cytoplasm. The RuvA-RuvB-RuvC complex processes Holliday junction (HJ) DNA during genetic recombination and DNA repair, while the RuvA-RuvB complex plays an important role in the rescue of blocked DNA replication forks via replication fork reversal (RFR). RuvA specifically binds to HJ cruciform DNA, conferring on it an open structure. The RuvB hexamer acts as an ATP-dependent pump, pulling dsDNA into and through the RuvAB complex. HJ branch migration allows RuvC to scan DNA until it finds its consensus sequence, where it cleaves and resolves the cruciform DNA. The chain is Holliday junction branch migration complex subunit RuvA from Lacticaseibacillus casei (strain BL23) (Lactobacillus casei).